We begin with the raw amino-acid sequence, 108 residues long: Glutaredoxin-1 (108 aa).

The 104-residue stretch at 3 to 106 (EEFVQQRLAN…DILSSIGVLR (104 aa)) folds into the Glutaredoxin domain. A disulfide bridge links Cys23 with Cys26.

Belongs to the glutaredoxin family.

It localises to the virion. In terms of biological role, has thioltransferase and dehydroascorbate reductase activities. This chain is Glutaredoxin-1 (OPG075), found in Camelpox virus (strain M-96).